The chain runs to 186 residues: Peptide deformylase 2 (186 aa).

Residues cysteine 104 and histidine 146 each coordinate Fe cation. Glutamate 147 is a catalytic residue. Residue histidine 150 participates in Fe cation binding.

It belongs to the polypeptide deformylase family. The cofactor is Fe(2+).

It carries out the reaction N-terminal N-formyl-L-methionyl-[peptide] + H2O = N-terminal L-methionyl-[peptide] + formate. Removes the formyl group from the N-terminal Met of newly synthesized proteins. Requires at least a dipeptide for an efficient rate of reaction. N-terminal L-methionine is a prerequisite for activity but the enzyme has broad specificity at other positions. In Streptomyces avermitilis (strain ATCC 31267 / DSM 46492 / JCM 5070 / NBRC 14893 / NCIMB 12804 / NRRL 8165 / MA-4680), this protein is Peptide deformylase 2.